A 517-amino-acid polypeptide reads, in one-letter code: Ribosome assembly protein 4 (517 aa).

Positions 1 to 25 (MATLAPPPSKRQRREEIQRTQTQQD) are disordered. The interval 34–128 (LGSFKANFID…TITLSAEPQA (95 aa)) is ubiquitin-like (UBL) domain. WD repeat units lie at residues 144–184 (GHGQ…PKFT), 187–226 (GHTGWVLGVSWSPDGKYLATCSMDTTVRVWDPESGKQVNQ), 230–277 (GHAK…HVLS), 278–316 (GHKGSVSCVKWGGTDLIYTGSHDRSVRVWDAVKGTLVHN), 351–397 (EERR…SKPV), 402–441 (GHQNKVNHVQFSPDGTLIASAGWDNSTKLWNARDGKFIKN), 444–483 (GHVAPVYQCAWSADSRLVVTGSKDCTLKVWNVRTGKLAMD), and 486–517 (GHEDEVYAVDWAADGELVASGGKDKAVRTWRN).

This sequence belongs to the NLE1/RSA4 family. Associates with the pre-60S ribosomal particle. Interacts (via WD repeats) with uL18. Interacts (via UBL domain) with MDN1 (via VWFA/MIDAS domain). Interacts (via WD repeats) with NSA2.

The protein resides in the nucleus. The protein localises to the nucleolus. Functionally, involved in ribosome biogenesis. Required for processing and efficient intra-nuclear transport of pre-60S ribosomal subunits. Interacts with the AAA-ATPase Midasin, which is essential for the ATP-dependent dissociation of a group of nonribosomal factors from the pre-60S particle. The polypeptide is Ribosome assembly protein 4 (Chaetomium thermophilum (strain DSM 1495 / CBS 144.50 / IMI 039719) (Thermochaetoides thermophila)).